The sequence spans 152 residues: Transcriptional repressor NrdR (152 aa).

A zinc finger spans residues 3-34 (CPKCGSLNDKVVDTRQSKDGTVIRRRRECLDC). Residues 49 to 139 (IVVKKKNGTT…VYNEFQDIKD (91 aa)) enclose the ATP-cone domain.

It belongs to the NrdR family. Zn(2+) is required as a cofactor.

Its function is as follows. Negatively regulates transcription of bacterial ribonucleotide reductase nrd genes and operons by binding to NrdR-boxes. In Persephonella marina (strain DSM 14350 / EX-H1), this protein is Transcriptional repressor NrdR.